The following is a 1320-amino-acid chain: Clustered mitochondria protein homolog (1320 aa).

3 disordered regions span residues Gln-166–Met-241, Tyr-552–Ile-582, and Leu-683–Gln-708. Over residues Thr-185 to Ile-194 the composition is skewed to basic and acidic residues. Basic residues predominate over residues Lys-202–Lys-213. Basic and acidic residues-rich tracts occupy residues Asn-226–Met-241, Gln-565–Lys-575, and Leu-683–Ile-695. One can recognise a Clu domain in the interval Lys-379–Thr-649. 5 TPR repeats span residues Gly-955–Val-988, Gly-997–Thr-1030, Val-1039–Leu-1072, Ala-1081–Leu-1114, and Ser-1123–Glu-1156. Residues Lys-1204–Asn-1320 form a disordered region. The span at Lys-1237–Lys-1247 shows a compositional bias: basic residues. The segment covering Ser-1248–Ser-1311 has biased composition (low complexity).

The protein belongs to the CLU family.

It is found in the cytoplasm. Functionally, mRNA-binding protein involved in proper cytoplasmic distribution of mitochondria. This Dictyostelium discoideum (Social amoeba) protein is Clustered mitochondria protein homolog.